Consider the following 175-residue polypeptide: Sec-independent protein translocase protein TatB (175 aa).

Residues 1–21 (MLDLGLSKMALIGVVALVVLG) form a helical membrane-spanning segment. The interval 155-175 (SGAARVARHQPASLRRPTRFF) is disordered.

Belongs to the TatB family. The Tat system comprises two distinct complexes: a TatABC complex, containing multiple copies of TatA, TatB and TatC subunits, and a separate TatA complex, containing only TatA subunits. Substrates initially bind to the TatABC complex, which probably triggers association of the separate TatA complex to form the active translocon.

It is found in the cell inner membrane. In terms of biological role, part of the twin-arginine translocation (Tat) system that transports large folded proteins containing a characteristic twin-arginine motif in their signal peptide across membranes. Together with TatC, TatB is part of a receptor directly interacting with Tat signal peptides. TatB may form an oligomeric binding site that transiently accommodates folded Tat precursor proteins before their translocation. This is Sec-independent protein translocase protein TatB from Burkholderia lata (strain ATCC 17760 / DSM 23089 / LMG 22485 / NCIMB 9086 / R18194 / 383).